We begin with the raw amino-acid sequence, 132 residues long: Fatty acid-binding protein, intestinal (132 aa).

A2 bears the N-acetylalanine mark. Residues W83 and R107 each contribute to the hexadecanoate site. Tetradecanoate is bound by residues W83 and R107.

The protein belongs to the calycin superfamily. Fatty-acid binding protein (FABP) family. Expressed in the small intestine. Expression in the mucosal cells of the ileum extends from the midvillar region to the villus tips.

It is found in the cytoplasm. FABPs are thought to play a role in the intracellular transport of long-chain fatty acids and their acyl-CoA esters. FABP2 is probably involved in triglyceride-rich lipoprotein synthesis. Binds saturated long-chain fatty acids with a high affinity, but binds with a lower affinity to unsaturated long-chain fatty acids. FABP2 may also help maintain energy homeostasis by functioning as a lipid sensor. The polypeptide is Fatty acid-binding protein, intestinal (Fabp2) (Rattus norvegicus (Rat)).